The primary structure comprises 789 residues: Molybdenum cofactor sulfurase (789 aa).

Position 251 is an N6-(pyridoxal phosphate)lysine (K251). Residue C422 is part of the active site. The region spanning 628-789 is the MOSC domain; it reads GDQVAQWLDQ…LICGETLEVD (162 aa). S741 carries the phosphoserine modification.

Belongs to the class-V pyridoxal-phosphate-dependent aminotransferase family. MOCOS subfamily. Pyridoxal 5'-phosphate serves as cofactor.

It carries out the reaction Mo-molybdopterin + L-cysteine + AH2 = thio-Mo-molybdopterin + L-alanine + A + H2O. It participates in cofactor biosynthesis; molybdopterin biosynthesis. In terms of biological role, sulfurates the molybdenum cofactor. Sulfation of molybdenum is essential for xanthine dehydrogenase (XDH) and aldehyde oxidase (ADO) enzymes in which molybdenum cofactor is liganded by 1 oxygen and 1 sulfur atom in active form. The chain is Molybdenum cofactor sulfurase from Drosophila willistoni (Fruit fly).